The sequence spans 124 residues: MAVVKKRRNVVVGEVHIYATYNNVIVTIADQQGHVLVTTSAGACNFKGSKKATPYAAQETVARAVKAVVERNGMRTVSVCISGPGAGREAAIRAVQTCNLNVTSIRDTTKLPHNGCKLPKRRRV.

The protein belongs to the universal ribosomal protein uS11 family. Part of the 30S ribosomal subunit. Interacts with proteins S7 and S18. Binds to IF-3.

In terms of biological role, located on the platform of the 30S subunit, it bridges several disparate RNA helices of the 16S rRNA. Forms part of the Shine-Dalgarno cleft in the 70S ribosome. The polypeptide is Small ribosomal subunit protein uS11 (Anaplasma marginale (strain St. Maries)).